Here is a 396-residue protein sequence, read N- to C-terminus: Mitogen-activated protein kinase mpkC (396 aa).

The 280-residue stretch at Tyr20–Leu299 folds into the Protein kinase domain. ATP contacts are provided by residues Val26–Val34 and Lys49. The active-site Proton acceptor is Asp141. Thr171 is subject to Phosphothreonine. Positions Thr171–Tyr173 match the TXY motif. Position 173 is a phosphotyrosine (Tyr173).

The protein belongs to the protein kinase superfamily. Ser/Thr protein kinase family. MAP kinase subfamily. HOG1 sub-subfamily. Requires Mg(2+) as cofactor. In terms of processing, dually phosphorylated on Thr-171 and Tyr-173, which activates the enzyme.

The enzyme catalyses L-seryl-[protein] + ATP = O-phospho-L-seryl-[protein] + ADP + H(+). It carries out the reaction L-threonyl-[protein] + ATP = O-phospho-L-threonyl-[protein] + ADP + H(+). With respect to regulation, activated by tyrosine and threonine phosphorylation. In terms of biological role, mitogen-activated protein kinase required for growth on media where sorbitol or mannitol is the sole carbon source. This Aspergillus niger (strain ATCC MYA-4892 / CBS 513.88 / FGSC A1513) protein is Mitogen-activated protein kinase mpkC (mpkC).